An 83-amino-acid chain; its full sequence is UPF0457 protein YnzG (83 aa).

It belongs to the UPF0457 family.

The protein is UPF0457 protein YnzG (ynzG) of Bacillus subtilis (strain 168).